Consider the following 235-residue polypeptide: MSDPREIAQRVLEEWEPKTKLGRLVKEGQITDIHEIFRKGYQIKEPEIVDVLLPEVNLRENQEVLDIALTVRMTDSGRRIRFRVLAAVGNRDGYVGLGIGHGREVGIAIRKAINYAKMNIIEIKRGCGSWECRCRRPHSIPFAVEGKEGSVRVKLMPGPRGLGLVIGDVGKKILTLAGVQDVWSQTLGETRTTVNFAKAVFNALYNTNRVAIKPEDIERYGIVVGRAMPTTFEVE.

Residues 60–123 (ENQEVLDIAL…NYAKMNIIEI (64 aa)) form the S5 DRBM domain. The Zn(2+) site is built by C127, C132, C134, and H138.

The protein belongs to the universal ribosomal protein uS5 family. In terms of assembly, part of the 30S ribosomal subunit. Contacts protein S4. It depends on Zn(2+) as a cofactor.

Functionally, with S4 and S12 plays an important role in translational accuracy. This is Small ribosomal subunit protein uS5 from Thermococcus kodakarensis (strain ATCC BAA-918 / JCM 12380 / KOD1) (Pyrococcus kodakaraensis (strain KOD1)).